Consider the following 73-residue polypeptide: Translation initiation factor IF-1 (73 aa).

The S1-like domain occupies 1–73 (MAKKQGAIEI…TRGRIVYRYK (73 aa)).

Belongs to the IF-1 family. As to quaternary structure, component of the 30S ribosomal translation pre-initiation complex which assembles on the 30S ribosome in the order IF-2 and IF-3, IF-1 and N-formylmethionyl-tRNA(fMet); mRNA recruitment can occur at any time during PIC assembly.

It is found in the cytoplasm. Functionally, one of the essential components for the initiation of protein synthesis. Stabilizes the binding of IF-2 and IF-3 on the 30S subunit to which N-formylmethionyl-tRNA(fMet) subsequently binds. Helps modulate mRNA selection, yielding the 30S pre-initiation complex (PIC). Upon addition of the 50S ribosomal subunit IF-1, IF-2 and IF-3 are released leaving the mature 70S translation initiation complex. The sequence is that of Translation initiation factor IF-1 from Streptomyces coelicolor (strain ATCC BAA-471 / A3(2) / M145).